The chain runs to 525 residues: Hydroxyneurosporene desaturase (525 aa).

The protein belongs to the carotenoid/retinoid oxidoreductase family.

It catalyses the reaction rhodopin + A = (3E)-3,4-didehydrorhodopin + AH2. It functions in the pathway carotenoid biosynthesis; spheroidene biosynthesis. Functionally, catalyzes the introduction of C-3,4 double bonds into 1-hydroxyneurosporene (1-HO-Neu) to yield demethylspheroidene (DMS). The preferred substrates are 1-hydroxy-neurosporene, 1-hydroxy-lycopene and 1,1-dihydroxyneurosporene, however the 3,4-didehydrolycopene derivatives such as 1,1-dihydroxy-3,4-didehydrolycopene, 1-methoxy-1-hydroxy-3,4-didehydrolycopene and 1-hydroxy-3,4-didehydrolycopene are also efficiently converted. 1-HO-carotene derivatives can be also used. This Rubrivivax gelatinosus (Rhodocyclus gelatinosus) protein is Hydroxyneurosporene desaturase (crtD).